A 230-amino-acid polypeptide reads, in one-letter code: tRNA (cytidine-2'-O-)-methyltransferase TrmJ (230 aa).

S-adenosyl-L-methionine-binding positions include Thr-79–Gly-81, Gly-115, Ile-135, and Pro-142–Met-144.

This sequence belongs to the class IV-like SAM-binding methyltransferase superfamily. RNA methyltransferase TrmH family. As to quaternary structure, homodimer.

The protein localises to the cytoplasm. The catalysed reaction is cytidine(32) in tRNA + S-adenosyl-L-methionine = 2'-O-methylcytidine(32) in tRNA + S-adenosyl-L-homocysteine + H(+). Catalyzes the formation of 2'O-methylated cytidine (Cm32) at position 32 in tRNA. In Methanocaldococcus jannaschii (strain ATCC 43067 / DSM 2661 / JAL-1 / JCM 10045 / NBRC 100440) (Methanococcus jannaschii), this protein is tRNA (cytidine-2'-O-)-methyltransferase TrmJ.